The primary structure comprises 455 residues: Keratin, type I cuticular Ha5 (455 aa).

The interval 1–97 (MASKCLKAGF…FGEGILTGNE (97 aa)) is head. The 312-residue stretch at 97–408 (EKETMQSLND…GLLESEDSKL (312 aa)) folds into the IF rod domain. The tract at residues 98–132 (KETMQSLNDRLAGYLEKVRQLEQENASLESRIREW) is coil 1A. The interval 133-143 (CEQQVPYMCPD) is linker 1. Positions 144–244 (YQSYFRTIEE…HEEEVNSLRC (101 aa)) are coil 1B. Residues 245-260 (QLGDRLNVEVDAAPPV) form a linker 12 region. Residues 261–404 (DLNRVLEEMR…NTYRGLLESE (144 aa)) form a coil 2 region. Residues 405 to 455 (DSKLPCNPCAPDYSPSKSCLPCLPAASCGPSAARTNCSPRPICVPCPGGRF) are tail.

This sequence belongs to the intermediate filament family. Early expression in the hair follicle, mainly found in supramatricial cells and lowermost cortical cells of the hair bulb.

The polypeptide is Keratin, type I cuticular Ha5 (KRT35) (Homo sapiens (Human)).